A 481-amino-acid chain; its full sequence is Delta(14)-sterol reductase ERG24B (481 aa).

8 consecutive transmembrane segments (helical) span residues 11 to 31 (FGGP…MQVL), 80 to 100 (LFAY…QIVL), 125 to 145 (LTGC…WTWI), 149 to 169 (YIQL…WTYL), 244 to 264 (TYGF…YYVL), 279 to 299 (ITSD…VPFL), 313 to 333 (HLGP…LYIF), and 427 to 447 (AAPW…FLLI).

This sequence belongs to the ERG4/ERG24 family.

It localises to the endoplasmic reticulum membrane. It catalyses the reaction 4,4-dimethyl-5alpha-cholesta-8,24-dien-3beta-ol + NADP(+) = 4,4-dimethyl-5alpha-cholesta-8,14,24-trien-3beta-ol + NADPH + H(+). It participates in steroid metabolism; ergosterol biosynthesis. Its function is as follows. Delta(14)-sterol reductase; part of the third module of ergosterol biosynthesis pathway that includes the late steps of the pathway. Catalyzes the reduction of the C14=C15 double bond within 4,4,24-trimethyl ergosta-8,14,24(28)-trienolto produce 4,4-dimethylfecosterol. The third module or late pathway involves the ergosterol synthesis itself through consecutive reactions that mainly occur in the endoplasmic reticulum (ER) membrane. Firstly, the squalene synthase ERG9 catalyzes the condensation of 2 farnesyl pyrophosphate moieties to form squalene, which is the precursor of all steroids. Squalene synthase is crucial for balancing the incorporation of farnesyl diphosphate (FPP) into sterol and nonsterol isoprene synthesis. Secondly, squalene is converted into lanosterol by the consecutive action of the squalene epoxidase ERG1 and the lanosterol synthase ERG7. Then, the delta(24)-sterol C-methyltransferase ERG6 methylates lanosterol at C-24 to produce eburicol. Eburicol is the substrate of the sterol 14-alpha demethylase encoded by CYP51A, CYP51B and CYP51C, to yield 4,4,24-trimethyl ergosta-8,14,24(28)-trienol. CYP51B encodes the enzyme primarily responsible for sterol 14-alpha-demethylation, and plays an essential role in ascospore formation. CYP51A encodes an additional sterol 14-alpha-demethylase, induced on ergosterol depletion and responsible for the intrinsic variation in azole sensitivity. The third CYP51 isoform, CYP51C, does not encode a sterol 14-alpha-demethylase, but is required for full virulence on host wheat ears. The C-14 reductase ERG24 then reduces the C14=C15 double bond which leads to 4,4-dimethylfecosterol. A sequence of further demethylations at C-4, involving the C-4 demethylation complex containing the C-4 methylsterol oxidases ERG25, the sterol-4-alpha-carboxylate 3-dehydrogenase ERG26 and the 3-keto-steroid reductase ERG27, leads to the production of fecosterol via 4-methylfecosterol. ERG28 has a role as a scaffold to help anchor ERG25, ERG26 and ERG27 to the endoplasmic reticulum. The C-8 sterol isomerase ERG2 then catalyzes the reaction which results in unsaturation at C-7 in the B ring of sterols and thus converts fecosterol to episterol. The sterol-C5-desaturases ERG3A and ERG3BB then catalyze the introduction of a C-5 double bond in the B ring to produce 5-dehydroepisterol. The C-22 sterol desaturases ERG5A and ERG5B further convert 5-dehydroepisterol into ergosta-5,7,22,24(28)-tetraen-3beta-ol by forming the C-22(23) double bond in the sterol side chain. Finally, ergosta-5,7,22,24(28)-tetraen-3beta-ol is substrate of the C-24(28) sterol reductase ERG4 to produce ergosterol. The chain is Delta(14)-sterol reductase ERG24B from Gibberella zeae (strain ATCC MYA-4620 / CBS 123657 / FGSC 9075 / NRRL 31084 / PH-1) (Wheat head blight fungus).